The chain runs to 629 residues: Phosphomethylpyrimidine synthase (629 aa).

Substrate-binding positions include asparagine 215, methionine 244, tyrosine 273, histidine 309, 329-331 (SRG), 370-373 (DGLR), and glutamate 409. Residue histidine 413 participates in Zn(2+) binding. Position 436 (tyrosine 436) interacts with substrate. Histidine 477 lines the Zn(2+) pocket. Cysteine 557, cysteine 560, and cysteine 565 together coordinate [4Fe-4S] cluster. Residues 589–610 (ENIKRETSAEEAEEAREGMSDM) form a disordered region.

It belongs to the ThiC family. Homodimer. Requires [4Fe-4S] cluster as cofactor.

The catalysed reaction is 5-amino-1-(5-phospho-beta-D-ribosyl)imidazole + S-adenosyl-L-methionine = 4-amino-2-methyl-5-(phosphooxymethyl)pyrimidine + CO + 5'-deoxyadenosine + formate + L-methionine + 3 H(+). Its pathway is cofactor biosynthesis; thiamine diphosphate biosynthesis. Functionally, catalyzes the synthesis of the hydroxymethylpyrimidine phosphate (HMP-P) moiety of thiamine from aminoimidazole ribotide (AIR) in a radical S-adenosyl-L-methionine (SAM)-dependent reaction. This is Phosphomethylpyrimidine synthase from Erythrobacter litoralis (strain HTCC2594).